The sequence spans 252 residues: 14-3-3 protein homolog 1 (252 aa).

Belongs to the 14-3-3 family.

This is 14-3-3 protein homolog 1 from Schistosoma mansoni (Blood fluke).